Reading from the N-terminus, the 164-residue chain is Small ribosomal subunit protein uS5 (164 aa).

The 64-residue stretch at 10–73 (LEERVVAINR…EDAKKNLIEV (64 aa)) folds into the S5 DRBM domain.

This sequence belongs to the universal ribosomal protein uS5 family. As to quaternary structure, part of the 30S ribosomal subunit. Contacts proteins S4 and S8.

With S4 and S12 plays an important role in translational accuracy. In terms of biological role, located at the back of the 30S subunit body where it stabilizes the conformation of the head with respect to the body. This Streptococcus gordonii (strain Challis / ATCC 35105 / BCRC 15272 / CH1 / DL1 / V288) protein is Small ribosomal subunit protein uS5.